The sequence spans 2481 residues: Tetratricopeptide repeat protein 28 (2481 aa).

Met1 is modified (N-acetylmethionine). Positions 1–14 are enriched in pro residues; the sequence is MEQSPPPAPEPTQG. The segment at 1–48 is disordered; it reads MEQSPPPAPEPTQGPTPARSRRRREPESPPASAPIPLFGADTIGQRSP. Phosphoserine is present on Ser28. 28 TPR repeats span residues 58 to 91, 93 to 125, 126 to 159, 196 to 229, 234 to 267, 274 to 307, 314 to 347, 354 to 387, 394 to 427, 434 to 467, 474 to 507, 514 to 547, 554 to 587, 594 to 627, 634 to 667, 674 to 707, 714 to 747, 754 to 787, 794 to 827, 834 to 867, 877 to 910, 917 to 950, 957 to 990, 997 to 1030, 1037 to 1070, 1077 to 1110, 1117 to 1150, and 1169 to 1202; these read FVEKVRQSNQACHDGDFHTAIVLYNEALAVDPQN, ILYSNRSAAYMKIQQYDKALDDAIKARLLNPKW, PKAYFRQGVALQYLGRHADALAAFASGLAQDPKS, FVVVSVVGQELLTAGHHGASVVVLEAALKIGTCS, GSVFSALSSAYWSLGNTEKSTGYMQQDLDVAKTL, CRAHGNLGSAFFSKGNYREALTNHRHQLVLAMKL, SSALSSLGHVYTAIGDYPNALASHKQCVLLAKQS, ARELGNMGAVYIAMGDFENAVQCHEQHLKIAKDL, ARAYSNLGSAYHYRRNFDKAMSYHNYVLELAQEL, MRAYAGLGHAARCMQDLERAKQYHEQQLGIAEDL, GRASSNLGIIHQMKGDYDTALKLHKTHLCIAQEL, GRAYGNMGNAYNALGMYDQAVKYHRQELQISMEV, ASTHGNLAVAYQALGAHDRALQHYQNHLNIAREL, ARALSNLGNFHCSRGEYVQAAPYYEQYLRLAPDL, GKVCHNLGYAHYCLGNYQEAVKYYEQDLALAKDL, AKAYCNLGLAFKALLNFSKAEECQKYLLSLAQSL, FRALGNLGDIFICKKDINGAIKFYEQQLGLAHQV, ASAYAALGTAYRMIQKYDKALGYHTQELEVYQEL, CRAHGHLAAVYMALGKYTMAFKCYEEQLDLGQKL, AQVYGNMGITKMNMNVMEEAIGYFEQQLAMLQQL, GRAYGNLGDCYEALGDYEEAIKYYEQYLSVAQSL, AKAYRGLGNGHRAMGSLQQALVCFEKRLVVAHEL, AQAYGELGSLHSQLGNYEQAISCLERQLNIARDM, SDAACGLGGVYQQMGEYDTALQYHQLDLQIAEET, GRAYGNLGLTYESLGTFERAVVYQEQHLSIAAQM, TVSYSSLGRTHHALQNYSQAVMYLQEGLRLAEQL, AKIRHGLGLSLWASGNLEEAQHQLYRASALFETI, and TSSYQALQRVLVSLGHHDEALAVAERGRTRAFAD. Ser1590 is modified (phosphoserine). Disordered regions lie at residues 2004–2055, 2075–2161, and 2176–2339; these read FVSK…DEEE, NTCF…DPQE, and AVER…PADA. Polar residues-rich tracts occupy residues 2029–2043 and 2096–2122; these read AYLQRSTLPRSQLPP and SVSSKGSISTPNSPVKMTLIPSPNSPF. Ser2104 bears the Phosphoserine mark. Low complexity predominate over residues 2130-2146; that stretch reads SSDTGESDQSSTETDST. Basic and acidic residues predominate over residues 2149–2159; the sequence is SQEESNPKLDP. Residues 2183-2214 show a composition bias toward polar residues; sequence SGGQVSKSNNPEDGVQAPSSTAVFRASETSAF. 2 positions are modified to phosphoserine: Ser2224 and Ser2251. Residues 2238–2282 are compositionally biased toward polar residues; that stretch reads RSSSLPKVSSGYSSPTTSEMSIKDSPSQHSGRPSPGCDSQTSQLD. Positions 2307-2339 are enriched in low complexity; it reads SPSSGHQSPAGSAPSPALSYSSAGSARSSPADA. 2 positions are modified to phosphoserine: Ser2393 and Ser2398. Residues 2420–2467 are disordered; that stretch reads QHDGAPPKAPPNGHWRTETTSLGSLPLPAGPPATAPARPLRLPSGNGY.

Interacts with AURKB. As to expression, widely expressed in fetal tissues. In adult tissues, expressed in testis and ovary and, at much lower levels, in kidney and pancreas.

The protein resides in the cytoplasm. The protein localises to the cytoskeleton. It is found in the microtubule organizing center. It localises to the centrosome. Its subcellular location is the spindle. The protein resides in the spindle pole. The protein localises to the midbody. Functionally, during mitosis, may be involved in the condensation of spindle midzone microtubules, leading to the formation of midbody. This chain is Tetratricopeptide repeat protein 28 (TTC28), found in Homo sapiens (Human).